The following is a 314-amino-acid chain: Very long chain fatty acid elongase 4 (314 aa).

Asn20 is a glycosylation site (N-linked (GlcNAc...) asparagine). A run of 7 helical transmembrane segments spans residues 42 to 62, 78 to 98, 127 to 147, 165 to 185, 188 to 208, 217 to 237, and 247 to 267; these read LMQS…FVWL, VLII…RELF, ALWW…FFIL, MFTL…FFGA, NSFI…GPWI, YLTM…ALSL, and MHWA…NFYI. Residues 274–314 are disordered; sequence KKPKTGKTAMNGISANGVSKSEKQLVIENGKKQKNGKAKGD. A compositionally biased stretch (basic and acidic residues) spans 293–304; sequence KSEKQLVIENGK. Basic residues predominate over residues 305–314; that stretch reads KQKNGKAKGD. A Di-lysine motif motif is present at residues 310-314; sequence KAKGD.

The protein belongs to the ELO family. ELOVL4 subfamily. Oligomer. N-glycosylated. In terms of tissue distribution, expressed mainly in retina. Also expressed in skin and thymus.

The protein resides in the endoplasmic reticulum membrane. The catalysed reaction is a very-long-chain acyl-CoA + malonyl-CoA + H(+) = a very-long-chain 3-oxoacyl-CoA + CO2 + CoA. It catalyses the reaction hexacosanoyl-CoA + malonyl-CoA + H(+) = 3-oxooctacosanyol-CoA + CO2 + CoA. It carries out the reaction octacosanoyl-CoA + malonyl-CoA + H(+) = 3-oxo-triacontanoyl-CoA + CO2 + CoA. The enzyme catalyses triacontanoyl-CoA + malonyl-CoA + H(+) = 3-oxo-dotriacontanoyl-CoA + CO2 + CoA. The catalysed reaction is (19Z,22Z,25Z,28Z,31Z)-tetratriacontapentaenoyl-CoA + malonyl-CoA + H(+) = 3-oxo-(21Z,24Z,27Z,30Z,33Z)-hexatriacontapentaenoyl-CoA + CO2 + CoA. It catalyses the reaction (4Z,7Z,10Z,13Z,16Z,19Z)-docosahexaenoyl-CoA + malonyl-CoA + H(+) = 3-oxo-(6Z,9Z,12Z,15Z,18Z,21Z)-tetracosahexaenoyl-CoA + CO2 + CoA. It carries out the reaction (7Z,10Z,13Z,16Z)-docosatetraenoyl-CoA + malonyl-CoA + H(+) = (9Z,12Z,15Z,18Z)-3-oxotetracosatetraenoyl-CoA + CO2 + CoA. The enzyme catalyses (11Z,14Z,17Z,20Z,23Z)-hexacosapentaenoyl-CoA + malonyl-CoA + H(+) = 3-oxo-(13Z,16Z,19Z,22Z,25Z)-octacosapentaenoyl-CoA + CO2 + CoA. The catalysed reaction is (13Z,16Z,19Z,22Z,25Z)-octacosapentaenoyl-CoA + malonyl-CoA + H(+) = 3-oxo-(15Z,18Z,21Z,24Z,27Z)-triacontapentaenoyl-CoA + CO2 + CoA. It catalyses the reaction (15Z,18Z,21Z,24Z,27Z)-triacontapentaenoyl-CoA + malonyl-CoA + H(+) = 3-oxo-(17Z,20Z,23Z,26Z,29Z)-dotriacontapentaenoyl-CoA + CO2 + CoA. It carries out the reaction (17Z,20Z,23Z,26Z,29Z)-dotriacontapentaenoyl-CoA + malonyl-CoA + H(+) = 3-oxo-(19Z,22Z,25Z,28Z,31Z)-tetratriacontapentaenoyl-CoA + CO2 + CoA. The enzyme catalyses (21Z,24Z,27Z,30Z,33Z)-hexatriacontapentaenoyl-CoA + malonyl-CoA + H(+) = 3-oxo-(23Z,26Z,29Z,32Z,35Z)-octatriacontapentaenoyl-CoA + CO2 + CoA. The catalysed reaction is (11Z,14Z,17Z,20Z)-hexacosatetraenoyl-CoA + malonyl-CoA + H(+) = (13Z,16Z,19Z,22Z)-3-oxooctacosatetraenoyl-CoA + CO2 + CoA. It catalyses the reaction (13Z,16Z,19Z,22Z)-octacosatetraenoyl-CoA + malonyl-CoA + H(+) = 3-oxo-(15Z,18Z,21Z,24Z)-triacontatetraenoyl-CoA + CO2 + CoA. It carries out the reaction (15Z,18Z,21Z,24Z)-triacontatetraenoyl-CoA + malonyl-CoA + H(+) = 3-oxo-(17Z,20Z,23Z,26Z)-dotriacontatetraenoyl-CoA + CO2 + CoA. The enzyme catalyses (17Z,20Z,23Z,26Z)-dotriacontatetraenoyl-CoA + malonyl-CoA + H(+) = 3-oxo-(19Z,22Z,25Z,28Z)-tetratriacontatetraenoyl-CoA + CO2 + CoA. The catalysed reaction is (19Z,22Z,25Z,28Z)-tetratriacontatetraenoyl-CoA + malonyl-CoA + H(+) = 3-oxo-(21Z,24Z,27Z,30Z)-hexatriacontatetraenoyl-CoA + CO2 + CoA. It catalyses the reaction (21Z,24Z,27Z,30Z)-hexatriacontatetraenoyl-CoA + malonyl-CoA + H(+) = 3-oxo-(23Z,26Z,29Z,32Z)-octatriacontatetraenoyl-CoA + CO2 + CoA. It carries out the reaction (6Z,9Z,12Z,15Z,18Z,21Z)-tetracosahexaenoyl-CoA + malonyl-CoA + H(+) = 3-oxo-(8Z,11Z,14Z,17Z,20Z,23Z)-hexacosahexaenoyl-CoA + CO2 + CoA. The enzyme catalyses (8Z,11Z,14Z,17Z,20Z,23Z)-hexacosahexaenoyl-CoA + malonyl-CoA + H(+) = 3-oxo-(10Z,13Z,16Z,19Z,22Z,25Z)-octacosahexaenoyl-CoA + CO2 + CoA. The catalysed reaction is (10Z,13Z,16Z,19Z,22Z,25Z)-octacosahexaenoyl-CoA + malonyl-CoA + H(+) = 3-oxo-(12Z,15Z,18Z,21Z,24Z,27Z)-triacontahexaenoyl-CoA + CO2 + CoA. It catalyses the reaction (12Z,15Z,18Z,21Z,24Z,27Z)-triacontahexaenoyl-CoA + malonyl-CoA + H(+) = 3-oxo-(14Z,17Z,20Z,23Z,26Z,29Z)-dotriacontahexaenoyl-CoA + CO2 + CoA. It carries out the reaction (14Z,17Z,20Z,23Z,26Z,29Z)-dotriacontahexaenoyl-CoA + malonyl-CoA + H(+) = 3-oxo-(16Z,19Z,22Z,25Z,28Z,31Z)-tetratriacontahexaenoyl-CoA + CO2 + CoA. The enzyme catalyses (16Z,19Z,22Z,25Z,28Z,31Z)-tetratriacontahexaenoyl-CoA + malonyl-CoA + H(+) = 3-oxo-(18Z,21Z,24Z,27Z,30Z,33Z)-hexatriacontahexaenoyl-CoA + CO2 + CoA. The catalysed reaction is (9Z,12Z,15Z,18Z,21Z)-tetracosapentaenoyl-CoA + malonyl-CoA + H(+) = 3-oxo-(11Z,14Z,17Z,20Z,23Z)-hexacosapentaenoyl-CoA + CO2 + CoA. It participates in lipid metabolism; fatty acid biosynthesis. Catalyzes the first and rate-limiting reaction of the four reactions that constitute the long-chain fatty acids elongation cycle. This endoplasmic reticulum-bound enzymatic process allows the addition of 2 carbons to the chain of long- and very long-chain fatty acids (VLCFAs) per cycle. Condensing enzyme that catalyzes the synthesis of very long chain saturated (VLC-SFA) and polyunsaturated (PUFA) fatty acids that are involved in multiple biological processes as precursors of membrane lipids and lipid mediators. May play a critical role in early brain and skin development. The polypeptide is Very long chain fatty acid elongase 4 (Macaca fascicularis (Crab-eating macaque)).